Reading from the N-terminus, the 308-residue chain is Acetylglutamate kinase (308 aa).

Residues 67–68 (GG), R89, and N193 contribute to the substrate site.

It belongs to the acetylglutamate kinase family. ArgB subfamily.

It is found in the cytoplasm. The catalysed reaction is N-acetyl-L-glutamate + ATP = N-acetyl-L-glutamyl 5-phosphate + ADP. The protein operates within amino-acid biosynthesis; L-arginine biosynthesis; N(2)-acetyl-L-ornithine from L-glutamate: step 2/4. Its function is as follows. Catalyzes the ATP-dependent phosphorylation of N-acetyl-L-glutamate. In Nitratidesulfovibrio vulgaris (strain DP4) (Desulfovibrio vulgaris), this protein is Acetylglutamate kinase.